The chain runs to 144 residues: Ribosomal RNA large subunit methyltransferase H (144 aa).

S-adenosyl-L-methionine-binding positions include Gly92 and 111-116 (LSPMTF).

The protein belongs to the RNA methyltransferase RlmH family. Homodimer.

The protein localises to the cytoplasm. The catalysed reaction is pseudouridine(1915) in 23S rRNA + S-adenosyl-L-methionine = N(3)-methylpseudouridine(1915) in 23S rRNA + S-adenosyl-L-homocysteine + H(+). Its function is as follows. Specifically methylates the pseudouridine at position 1915 (m3Psi1915) in 23S rRNA. The protein is Ribosomal RNA large subunit methyltransferase H of Synechococcus sp. (strain CC9311).